The sequence spans 274 residues: Penicillin-insensitive murein endopeptidase (274 aa).

The signal sequence occupies residues M1–A19. 3 disulfides stabilise this stretch: C44-C265, C187-C235, and C216-C223. Residues H110, H113, D120, D147, H150, and H211 each coordinate Zn(2+). The tract at residues P227–I274 is disordered.

This sequence belongs to the peptidase M74 family. Dimer. The cofactor is Zn(2+).

Its subcellular location is the periplasm. Functionally, murein endopeptidase that cleaves the D-alanyl-meso-2,6-diamino-pimelyl amide bond that connects peptidoglycan strands. Likely plays a role in the removal of murein from the sacculus. This Escherichia coli (strain SE11) protein is Penicillin-insensitive murein endopeptidase.